Reading from the N-terminus, the 383-residue chain is Aurachin C monooxygenase/isomerase (383 aa).

Residues Gly15, Ser47, Val128, Asp285, and 295–299 (GQGGC) each bind FAD.

FAD is required as a cofactor.

It catalyses the reaction aurachin C + NADH + O2 + H(+) = 4-hydroxy-2-methyl-3-oxo-4-[(2E,6E)-farnesyl]-3,4-dihydroquinoline 1-oxide + NAD(+) + H2O. The catalysed reaction is aurachin C + NADPH + O2 + H(+) = 4-hydroxy-2-methyl-3-oxo-4-[(2E,6E)-farnesyl]-3,4-dihydroquinoline 1-oxide + NADP(+) + H2O. It carries out the reaction aurachin C + NADH + O2 + H(+) = aurachin C epoxide + NAD(+) + H2O. The enzyme catalyses aurachin C + NADPH + O2 + H(+) = aurachin C epoxide + NADP(+) + H2O. It catalyses the reaction aurachin C epoxide = 2-hydroxy-1a-methyl-7a-[(2E,6E)-farnesyl]-1a,2-dihydrooxireno[2,3-b]quinolin-7(7aH)-one. The catalysed reaction is 2-hydroxy-1a-methyl-7a-[(2E,6E)-farnesyl]-1a,2-dihydrooxireno[2,3-b]quinolin-7(7aH)-one = 4-hydroxy-2-methyl-3-oxo-4-[(2E,6E)-farnesyl]-3,4-dihydroquinoline 1-oxide. Its function is as follows. Catalyzes the initial step in the conversion of aurachin C to aurachin B. Catalyzes the epoxidation of the C(2)-C(3) double bond of aurachin C, which is followed by a semipinacol rearrangement, causing migration of the farnesyl group from C(3) to C(4). Accepts both NADH and NADPH, but has a preference for NADH. This chain is Aurachin C monooxygenase/isomerase, found in Stigmatella aurantiaca.